A 610-amino-acid chain; its full sequence is Probable indole-3-acetic acid-amido synthetase GH3.1 (610 aa).

The protein belongs to the IAA-amido conjugating enzyme family. In terms of tissue distribution, expressed in flowers.

Functionally, may catalyze the synthesis of indole-3-acetic acid (IAA)-amino acid conjugates, providing a mechanism for the plant to cope with the presence of excess auxin. In Oryza sativa subsp. japonica (Rice), this protein is Probable indole-3-acetic acid-amido synthetase GH3.1 (GH3.1).